Reading from the N-terminus, the 217-residue chain is UPF0502 protein PFLU_2135 (217 aa).

Belongs to the UPF0502 family.

The sequence is that of UPF0502 protein PFLU_2135 from Pseudomonas fluorescens (strain SBW25).